The chain runs to 374 residues: S-adenosylmethionine:tRNA ribosyltransferase-isomerase (374 aa).

It belongs to the QueA family. Monomer.

It localises to the cytoplasm. The enzyme catalyses 7-aminomethyl-7-carbaguanosine(34) in tRNA + S-adenosyl-L-methionine = epoxyqueuosine(34) in tRNA + adenine + L-methionine + 2 H(+). The protein operates within tRNA modification; tRNA-queuosine biosynthesis. Functionally, transfers and isomerizes the ribose moiety from AdoMet to the 7-aminomethyl group of 7-deazaguanine (preQ1-tRNA) to give epoxyqueuosine (oQ-tRNA). This is S-adenosylmethionine:tRNA ribosyltransferase-isomerase from Prochlorococcus marinus (strain MIT 9301).